The chain runs to 146 residues: Zinc metalloproteinase-disintegrin salmosin-3 (146 aa).

A Peptidase M12B domain is found at 1–57; the sequence is SCPCDANSCIMSATLSNEPSSRFSDCSFSLPSRFSDCSFNQYSSDIIHYHECLLNEP. Disulfide bonds link C2–C37, C4–C9, C68–C87, C79–C97, C81–C92, C91–C114, C105–C111, C110–C135, and C123–C142. In terms of domain architecture, Disintegrin spans 65 to 146; that stretch reads PPVCGNYYPE…GQSGVCPRNT (82 aa). Positions 127 to 129 match the Cell attachment site motif; the sequence is RGD.

Belongs to the venom metalloproteinase (M12B) family. P-II subfamily. P-IIb sub-subfamily. In terms of assembly, monomer (disintegrin). Zn(2+) is required as a cofactor. Expressed by the venom gland.

Its subcellular location is the secreted. Functionally, snake venom zinc metalloproteinase that inhibits ADP-induced platelet aggregation (probably by binding integrin alpha-IIb/beta-3 (ITGA2B/ITGB3)) and degrades fibrinogen. The protein is Zinc metalloproteinase-disintegrin salmosin-3 of Gloydius brevicauda (Korean slamosa snake).